The chain runs to 216 residues: Probable GTP-binding protein EngB (216 aa).

Residues 24 to 205 (ATPEIAFVGR…WARLAALAAE (182 aa)) enclose the EngB-type G domain. GTP-binding positions include 32 to 39 (GRSNVGKS), 59 to 63 (GRTRA), 86 to 89 (DLPG), 153 to 156 (TKTD), and 184 to 186 (FSA). Residues S39 and T61 each contribute to the Mg(2+) site.

The protein belongs to the TRAFAC class TrmE-Era-EngA-EngB-Septin-like GTPase superfamily. EngB GTPase family. The cofactor is Mg(2+).

Necessary for normal cell division and for the maintenance of normal septation. This chain is Probable GTP-binding protein EngB, found in Anaeromyxobacter dehalogenans (strain 2CP-C).